The primary structure comprises 327 residues: GMP reductase (327 aa).

C176 acts as the Thioimidate intermediate in catalysis. NADP(+) is bound at residue 205–228; sequence IIADGGIRTHGDIAKSIRFGASMV.

This sequence belongs to the IMPDH/GMPR family. GuaC type 2 subfamily.

The catalysed reaction is IMP + NH4(+) + NADP(+) = GMP + NADPH + 2 H(+). Catalyzes the irreversible NADPH-dependent deamination of GMP to IMP. It functions in the conversion of nucleobase, nucleoside and nucleotide derivatives of G to A nucleotides, and in maintaining the intracellular balance of A and G nucleotides. This chain is GMP reductase, found in Streptococcus pyogenes serotype M49 (strain NZ131).